A 117-amino-acid chain; its full sequence is Large ribosomal subunit protein bL19 (117 aa).

This sequence belongs to the bacterial ribosomal protein bL19 family.

This protein is located at the 30S-50S ribosomal subunit interface and may play a role in the structure and function of the aminoacyl-tRNA binding site. This is Large ribosomal subunit protein bL19 from Methylibium petroleiphilum (strain ATCC BAA-1232 / LMG 22953 / PM1).